Here is a 430-residue protein sequence, read N- to C-terminus: Zinc finger CCCH domain-containing protein 48 (430 aa).

2 disordered regions span residues 1-27 (MDLDMNGGNKRVFQRLGGGSNRPTTDS) and 56-90 (GSGPVAASSNKRVADESGFAGPSHRRGPGFSGTAN). A C3H1-type 1 zinc finger spans residues 26–52 (DSNQKVCFHWRAGRCNRYPCPYLHREL). The C3H1-type 2 zinc finger occupies 102–129 (TKTEKLCKFWVDGNCPYGDKCRYLHCWS). 6 WD repeats span residues 142 to 183 (GHQK…GVLN), 221 to 258 (GPVGQVYSLVVGTDLLFAGTQDGSILVWRYNSTTSCFD), 265 to 304 (GHTLAVVSLYVGANRLYSGAMDNSIKVWSLDNLQCIQTLT), 306 to 342 (HTSVVMSLICWDQFLLSCSLDNTVKIWAATEGGNLEV), 345 to 389 (THKE…ERGK), and 391 to 429 (LAKQEIRSIQIGPGGIFFTGDGSGQVKVWKWSTESTPIL).

In Arabidopsis thaliana (Mouse-ear cress), this protein is Zinc finger CCCH domain-containing protein 48 (ZFWD1).